Reading from the N-terminus, the 305-residue chain is Ribosomal RNA small subunit methyltransferase H (305 aa).

S-adenosyl-L-methionine contacts are provided by residues 49 to 51 (GGH), D68, F100, D116, and Q123.

This sequence belongs to the methyltransferase superfamily. RsmH family.

The protein resides in the cytoplasm. It catalyses the reaction cytidine(1402) in 16S rRNA + S-adenosyl-L-methionine = N(4)-methylcytidine(1402) in 16S rRNA + S-adenosyl-L-homocysteine + H(+). Its function is as follows. Specifically methylates the N4 position of cytidine in position 1402 (C1402) of 16S rRNA. This Synechocystis sp. (strain ATCC 27184 / PCC 6803 / Kazusa) protein is Ribosomal RNA small subunit methyltransferase H.